Here is a 157-residue protein sequence, read N- to C-terminus: Nascent polypeptide-associated complex subunit beta-1 (157 aa).

Disordered stretches follow at residues 19–42 (KVGG…KDDT) and 126–157 (EKHE…ADVE). Residues 38–103 (NKDDTKLQSQ…PQEKNLQDLF (66 aa)) enclose the NAC-A/B domain. Positions 126 to 142 (EKHEAKAPADAEKKDEA) are enriched in basic and acidic residues. Phosphothreonine is present on Thr151.

It belongs to the NAC-beta family. As to quaternary structure, part of the nascent polypeptide-associated complex (NAC), consisting of EGD2 and either EGD1 or BTT1. NAC associates with ribosomes via EGD1 or BTT1, and with the CCR4-NOT complex.

The protein localises to the cytoplasm. It localises to the nucleus. Functionally, component of the nascent polypeptide-associated complex (NAC), a dynamic component of the ribosomal exit tunnel, protecting the emerging polypeptides from interaction with other cytoplasmic proteins to ensure appropriate nascent protein targeting. The NAC complex also promotes mitochondrial protein import by enhancing productive ribosome interactions with the outer mitochondrial membrane and blocks the inappropriate interaction of ribosomes translating non-secretory nascent polypeptides with translocation sites in the membrane of the endoplasmic reticulum. EGD1 may act as a transcription factor that exert a negative effect on the expression of several genes that are transcribed by RNA polymerase II. The protein is Nascent polypeptide-associated complex subunit beta-1 (EGD1) of Saccharomyces cerevisiae (strain YJM789) (Baker's yeast).